A 432-amino-acid polypeptide reads, in one-letter code: Glutamate-1-semialdehyde 2,1-aminomutase 1 (432 aa).

At Lys268 the chain carries N6-(pyridoxal phosphate)lysine.

Belongs to the class-III pyridoxal-phosphate-dependent aminotransferase family. HemL subfamily. In terms of assembly, homodimer. It depends on pyridoxal 5'-phosphate as a cofactor.

The protein localises to the cytoplasm. It catalyses the reaction (S)-4-amino-5-oxopentanoate = 5-aminolevulinate. It participates in porphyrin-containing compound metabolism; protoporphyrin-IX biosynthesis; 5-aminolevulinate from L-glutamyl-tRNA(Glu): step 2/2. The polypeptide is Glutamate-1-semialdehyde 2,1-aminomutase 1 (Bacillus mycoides (strain KBAB4) (Bacillus weihenstephanensis)).